Reading from the N-terminus, the 215-residue chain is UPF0056 membrane protein BU267 (215 aa).

A run of 6 helical transmembrane segments spans residues 14–34 (FFIG…FTTM), 56–76 (LILL…GISI), 81–101 (IAGG…QFIK), 120–140 (VVPL…TIVW), 150–170 (LFLC…CFEA), and 189–209 (IMGL…IGAI).

This sequence belongs to the UPF0056 (MarC) family.

It localises to the cell membrane. This is UPF0056 membrane protein BU267 from Buchnera aphidicola subsp. Acyrthosiphon pisum (strain APS) (Acyrthosiphon pisum symbiotic bacterium).